We begin with the raw amino-acid sequence, 266 residues long: HLA class II histocompatibility antigen, DRB1 beta chain (266 aa).

Residues 1-29 (MVCLKLPGGSCMTALTVTLMVLSSPLALS) form the signal peptide. Positions 30 to 124 (GDTRPRFLWQ…VESFTVQRRV (95 aa)) are beta-1. The Extracellular segment spans residues 30 to 227 (GDTRPRFLWQ…RARSESAQSK (198 aa)). C44 and C108 form a disulfide bridge. Residue N48 is glycosylated (N-linked (GlcNAc...) asparagine). D86, W90, H110, N111, and R122 together coordinate a peptide antigen. Residues 125 to 227 (QPKVTVYPSK…RARSESAQSK (103 aa)) are beta-2. The Ig-like C1-type domain maps to 126-214 (PKVTVYPSKT…EHPSVTSPLT (89 aa)). The cysteines at positions 146 and 202 are disulfide-linked. A helical transmembrane segment spans residues 228–248 (MLSGVGGFVLGLLFLGAGLFI). The Cytoplasmic segment spans residues 249-266 (YFRNQKGHSGLQPTGFLS). A Glycyl lysine isopeptide (Lys-Gly) (interchain with G-Cter in ubiquitin) cross-link involves residue K254.

Heterotrimer that consists of an alpha chain HLA-DRA, a beta chain HLA-DRB1 and a peptide (peptide-MHCII). Newly synthesized alpha and beta chains forms a heterodimer (MHCII) that associates with the CD74/invariant chain (Ii) in the endoplasmic reticulum (ER). Ii is a trimer composed of three subunits and each subunit interacts with one MHCII dimer, blocking the peptide-binding cleft. As a result, MHCII molecules cannot bind peptides present in the ER. The complex of MHCII and CD74/Ii is transported in vesicles from ER to Golgi to lysosomes, where it encounters antigenic peptides generated via proteolysis of endocytosed antigens. MHCII dimers are dissociated from CD74/Ii by the combined action of proteolysis and HLA-DM. Lysosomal enzymes such as cathepsin, degrade CD74/Ii leaving a 24 amino acid remnant called class II-associated Ii or CLIP. Interacts (via the peptide binding cleft) with CLIP; this interaction inhibits antigen peptide binding before entry in the endosomal compartment. The displacement of CLIP and replacement by a high affinity peptide in lysosomes is performed by HLA-DM heterodimer. HLA-DM catalyzes CLIP dissociation from MHCII, stabilizes empty MHCII and mediates the selection of high affinity peptides. Interacts with HLA-DM heterodimer; this interaction is direct. Interacts with TCR (via CDR3). Interacts (via beta-2 domain) with CD4 coreceptor (via Ig-like V-type domain); this interaction is of exceptionally low affinity yet necessary for optimal recognition of antigenic peptides. In terms of assembly, (Microbial infection) Interacts with Staphylococcus aureus enterotoxin A/entA, enterotoxin B/entB, enterotoxin C1/entC1, enterotoxin D/entD and enterotoxin H/entH. Enterotoxins bind outside the peptide-binding cleft of MHCII: enterotoxin H/entH interacts via the beta-1 domain of MHCII and in a zinc-dependent way, whereas enterotoxin B/entB interacts primarily via the alpha-1 domain. As to quaternary structure, (Microbial infection) Interacts with Epstein-Barr virus gp42 protein. In terms of processing, ubiquitinated by MARCHF1 and MARCHF8 at Lys-254 leading to sorting into the endosome system and down-regulation of MHCII. Expressed in professional APCs: monocyte/macrophages, dendritic cells and B cells (at protein level). Expressed in thymic epithelial cells (at protein level).

Its subcellular location is the cell membrane. The protein resides in the endoplasmic reticulum membrane. It localises to the lysosome membrane. The protein localises to the late endosome membrane. It is found in the autolysosome membrane. In terms of biological role, a beta chain of antigen-presenting major histocompatibility complex class II (MHCII) molecule. In complex with the alpha chain HLA-DRA, displays antigenic peptides on professional antigen presenting cells (APCs) for recognition by alpha-beta T cell receptor (TCR) on HLA-DRB1-restricted CD4-positive T cells. This guides antigen-specific T-helper effector functions, both antibody-mediated immune response and macrophage activation, to ultimately eliminate the infectious agents and transformed cells. Typically presents extracellular peptide antigens of 10 to 30 amino acids that arise from proteolysis of endocytosed antigens in lysosomes. In the tumor microenvironment, presents antigenic peptides that are primarily generated in tumor-resident APCs likely via phagocytosis of apoptotic tumor cells or macropinocytosis of secreted tumor proteins. Presents peptides derived from intracellular proteins that are trapped in autolysosomes after macroautophagy, a mechanism especially relevant for T cell selection in the thymus and central immune tolerance. The selection of the immunodominant epitopes follows two processing modes: 'bind first, cut/trim later' for pathogen-derived antigenic peptides and 'cut first, bind later' for autoantigens/self-peptides. The anchor residue at position 1 of the peptide N-terminus, usually a large hydrophobic residue, is essential for high affinity interaction with MHCII molecules. Allele DRB1*01:01: Displays an immunodominant epitope derived from Bacillus anthracis pagA/protective antigen, PA (KLPLYISNPNYKVNVYAVT), to both naive and PA-specific memory CD4-positive T cells. Presents immunodominant HIV-1 gag peptide (FRDYVDRFYKTLRAEQASQE) on infected dendritic cells for recognition by TRAV24-TRBV2 TCR on CD4-positive T cells and controls viral load. May present to T-helper 1 cells several HRV-16 epitopes derived from capsid proteins VP1 (PRFSLPFLSIASAYYMFYDG) and VP2 (PHQFINLRSNNSATLIVPYV), contributing to viral clearance. Displays commonly recognized peptides derived from IAV external protein HA (PKYVKQNTLKLAT and SNGNFIAPEYAYKIVK) and from internal proteins M, NP and PB1, with M-derived epitope (GLIYNRMGAVTTEV) being the most immunogenic. Presents a self-peptide derived from COL4A3 (GWISLWKGFSF) to TCR (TRAV14 biased) on CD4-positive, FOXP3-positive regulatory T cells and mediates immune tolerance to self. May present peptides derived from oncofetal trophoblast glycoprotein TPBG 5T4, known to be recognized by both T-helper 1 and regulatory T cells. Displays with low affinity a self-peptide derived from MBP (VHFFKNIVTPRTP). Functionally, allele DRB1*03:01: May present to T-helper 1 cells an HRV-16 epitope derived from capsid protein VP2 (NEKQPSDDNWLNFDGTLLGN), contributing to viral clearance. Displays self-peptides derived from retinal SAG (NRERRGIALDGKIKHE) and thyroid TG (LSSVVVDPSIRHFDV). Presents viral epitopes derived from HHV-6B gH/U48 and U85 antigens to polyfunctional CD4-positive T cells with cytotoxic activity implicated in control of HHV-6B infection. Presents several immunogenic epitopes derived from C.tetani neurotoxin tetX, playing a role in immune recognition and long-term protection. Its function is as follows. Allele DRB1*04:01: Presents an immunodominant bacterial epitope derived from M.tuberculosis esxB/culture filtrate antigen CFP-10 (EISTNIRQAGVQYSR), eliciting CD4-positive T cell effector functions such as IFNG production and cytotoxic activity. May present to T-helper 1 cells an HRV-16 epitope derived from capsid protein VP2 (NEKQPSDDNWLNFDGTLLGN), contributing to viral clearance. Presents tumor epitopes derived from melanoma-associated TYR antigen (QNILLSNAPLGPQFP and DYSYLQDSDPDSFQD), triggering CD4-positive T cell effector functions such as GMCSF production. Displays preferentially citrullinated self-peptides derived from VIM (GVYATR/citSSAVR and SAVRAR/citSSVPGVR) and ACAN (VVLLVATEGR/ CitVRVNSAYQDK). Displays self-peptides derived from COL2A1. In terms of biological role, allele DRB1*04:02: Displays native or citrullinated self-peptides derived from VIM. Allele DRB1*04:04: May present to T-helper 1 cells several HRV-16 epitopes derived from capsid proteins VP1 (HIVMQYMYVPPGAPIPTTRN) and VP2 (RGDSTITSQDVANAVVGYGV), contributing to viral clearance. Displays preferentially citrullinated self-peptides derived from VIM (SAVRAR/citSSVPGVR). Functionally, allele DRB1*04:05: May present to T-helper 1 cells an immunogenic epitope derived from tumor-associated antigen WT1 (KRYFKLSHLQMHSRKH), likely providing for effective antitumor immunity in a wide range of solid and hematological malignancies. Its function is as follows. Allele DRB1*05:01: Presents an immunodominant HIV-1 gag peptide (FRDYVDRFYKTLRAEQASQE) on infected dendritic cells for recognition by TRAV24-TRBV2 TCR on CD4-positive T cells and controls viral load. In terms of biological role, allele DRB1*07:01: Upon EBV infection, presents latent antigen EBNA2 peptide (PRSPTVFYNIPPMPLPPSQL) to CD4-positive T cells, driving oligoclonal expansion and selection of a dominant virus-specific memory T cell subset with cytotoxic potential to directly eliminate virus-infected B cells. May present to T-helper 1 cells several HRV-16 epitopes derived from capsid proteins VP1 (PRFSLPFLSIASAYYMFYDG) and VP2 (VPYVNAVPMDSMVRHNNWSL), contributing to viral clearance. In the context of tumor immunesurveillance, may present to T-helper 1 cells an immunogenic epitope derived from tumor-associated antigen WT1 (MTEYKLVVVGAVGVGKSALTIQLI), likely providing for effective antitumor immunity in a wide range of solid and hematological malignancies. In metastatic epithelial tumors, presents to intratumoral CD4-positive T cells a KRAS neoantigen (MTEYKLVVVGAVGVGKSALTIQLI) carrying G12V hotspot driver mutation and may mediate tumor regression. Allele DRB1*11:01: Displays an immunodominant HIV-1 gag peptide (FRDYVDRFYKTLRAEQASQE) on infected dendritic cells for recognition by TRAV24-TRBV2 TCR on CD4-positive T cells and controls viral load. May present to T-helper 1 cells an HRV-16 epitope derived from capsid protein VP2 (SDRIIQITRGDSTITSQDVA), contributing to viral clearance. Presents several immunogenic epitopes derived from C.tetani neurotoxin tetX, playing a role in immune recognition and longterm protection. In the context of tumor immunesurveillance, may present tumor-derived neoantigens to CD4-positive T cells and trigger anti-tumor helper functions. Functionally, allele DRB1*13:01: Presents viral epitopes derived from HHV-6B antigens to polyfunctional CD4-positive T cells implicated in control of HHV-6B infection. Its function is as follows. Allele DRB1*15:01: May present to T-helper 1 cells an HRV-16 epitope derived from capsid protein VP2 (SNNSATLIVPYVNAVPMDSM), contributing to viral clearance. Displays a self-peptide derived from MBP (ENPVVHFFKNIVTPR). May present to T-helper 1 cells an immunogenic epitope derived from tumor-associated antigen WT1 (KRYFKLSHLQMHSRKH), likely providing for effective antitumor immunity in a wide range of solid and hematological malignancies. In terms of biological role, allele DRB1*15:02: Displays an immunodominant HIV-1 gag peptide (FRDYVDRFYKTLRAEQASQE) on infected dendritic cells for recognition by TRAV24-TRBV2 TCR on CD4-positive T cells and controls viral load. May present to T-helper 1 cells an immunogenic epitope derived from tumor-associated antigen WT1 (KRYFKLSHLQMHSRKH), likely providing for effective antitumor immunity in a wide range of solid and hematological malignancies. (Microbial infection) Acts as a receptor for Epstein-Barr virus on lymphocytes. The chain is HLA class II histocompatibility antigen, DRB1 beta chain from Homo sapiens (Human).